The primary structure comprises 341 residues: Tetraacyldisaccharide 4'-kinase (341 aa).

65–72 contacts ATP; sequence TVGGSGKT.

It belongs to the LpxK family.

The catalysed reaction is a lipid A disaccharide + ATP = a lipid IVA + ADP + H(+). Its pathway is glycolipid biosynthesis; lipid IV(A) biosynthesis; lipid IV(A) from (3R)-3-hydroxytetradecanoyl-[acyl-carrier-protein] and UDP-N-acetyl-alpha-D-glucosamine: step 6/6. Its function is as follows. Transfers the gamma-phosphate of ATP to the 4'-position of a tetraacyldisaccharide 1-phosphate intermediate (termed DS-1-P) to form tetraacyldisaccharide 1,4'-bis-phosphate (lipid IVA). The protein is Tetraacyldisaccharide 4'-kinase of Shewanella woodyi (strain ATCC 51908 / MS32).